Consider the following 190-residue polypeptide: Potassium-transporting ATPase KdpC subunit (190 aa).

A helical transmembrane segment spans residues 10-30 (VLLLVLTGLTGFAYPLLSTAI).

It belongs to the KdpC family. As to quaternary structure, the system is composed of three essential subunits: KdpA, KdpB and KdpC.

The protein resides in the cell inner membrane. Functionally, part of the high-affinity ATP-driven potassium transport (or Kdp) system, which catalyzes the hydrolysis of ATP coupled with the electrogenic transport of potassium into the cytoplasm. This subunit acts as a catalytic chaperone that increases the ATP-binding affinity of the ATP-hydrolyzing subunit KdpB by the formation of a transient KdpB/KdpC/ATP ternary complex. The polypeptide is Potassium-transporting ATPase KdpC subunit (Sorangium cellulosum (strain So ce56) (Polyangium cellulosum (strain So ce56))).